Consider the following 661-residue polypeptide: Ubiquitin carboxyl-terminal hydrolase 25 (661 aa).

Residues 24-335 enclose the USP domain; that stretch reads LGLRNLGNTC…KAYILFFSRS (312 aa). Residue cysteine 33 is the Nucleophile of the active site. Histidine 294 serves as the catalytic Proton acceptor. 2 disordered regions span residues 387 to 406 and 449 to 558; these read GNLASSKPHKFIRPKPRAEQ and FHQD…LCSS. Basic and acidic residues predominate over residues 449 to 461; sequence FHQDENIAPKANK. Polar residues-rich tracts occupy residues 462–475 and 545–558; these read ENSVSVLPTKVNSG and NGVSTTQSKGLCSS.

This sequence belongs to the peptidase C19 family.

It carries out the reaction Thiol-dependent hydrolysis of ester, thioester, amide, peptide and isopeptide bonds formed by the C-terminal Gly of ubiquitin (a 76-residue protein attached to proteins as an intracellular targeting signal).. Functionally, recognizes and hydrolyzes the peptide bond at the C-terminal Gly of ubiquitin. Involved in the processing of poly-ubiquitin precursors as well as that of ubiquitinated proteins. This Arabidopsis thaliana (Mouse-ear cress) protein is Ubiquitin carboxyl-terminal hydrolase 25 (UBP25).